Here is a 124-residue protein sequence, read N- to C-terminus: Acidic phospholipase A2 (124 aa).

Cystine bridges form between C26–C116, C28–C44, C43–C95, C49–C124, C50–C88, C57–C81, and C75–C86. The Ca(2+) site is built by Y27, G29, and G31. Residue H47 is part of the active site. Ca(2+) is bound at residue D48. The active site involves D89.

The protein belongs to the phospholipase A2 family. Group II subfamily. D49 sub-subfamily. In terms of assembly, monomer. Requires Ca(2+) as cofactor. In terms of tissue distribution, expressed by the venom gland.

It is found in the secreted. It carries out the reaction a 1,2-diacyl-sn-glycero-3-phosphocholine + H2O = a 1-acyl-sn-glycero-3-phosphocholine + a fatty acid + H(+). Its function is as follows. Snake venom phospholipase A2 (PLA2) that acts in vivo as an anti-thrombotic agent. Inhibits platelet aggregation induced by ADP, arachidonic acid, and thrombin. PLA2 catalyzes the calcium-dependent hydrolysis of the 2-acyl groups in 3-sn-phosphoglycerides. This Gloydius halys (Chinese water mocassin) protein is Acidic phospholipase A2.